The following is a 276-amino-acid chain: DNA repair protein RecO (276 aa).

This sequence belongs to the RecO family.

Functionally, involved in DNA repair and RecF pathway recombination. This chain is DNA repair protein RecO, found in Mycobacterium sp. (strain JLS).